We begin with the raw amino-acid sequence, 298 residues long: Phospholipase A1 (298 aa).

Cys-4 and Cys-87 are disulfide-bonded. Asn-88 and Asn-122 each carry an N-linked (GlcNAc...) asparagine glycan. The Nucleophile role is filled by Ser-134. Catalysis depends on Asp-162, which acts as the Charge relay system. 2 cysteine pairs are disulfide-bonded: Cys-173–Cys-178 and Cys-216–Cys-225. His-227 serves as the catalytic Charge relay system. 3 cysteine pairs are disulfide-bonded: Cys-242–Cys-266, Cys-243–Cys-291, and Cys-259–Cys-264.

It belongs to the AB hydrolase superfamily. Lipase family. In terms of tissue distribution, expressed by the venom gland.

It localises to the secreted. The enzyme catalyses a 1,2-diacyl-sn-glycero-3-phosphocholine + H2O = a 2-acyl-sn-glycero-3-phosphocholine + a fatty acid + H(+). Its function is as follows. Catalyzes the hydrolysis of phosphatidylcholine with phospholipase A1 activity. May act as an allergen and induce hemolytic activity. The chain is Phospholipase A1 from Vespula squamosa (Southern yellow jacket).